Here is a 344-residue protein sequence, read N- to C-terminus: Serpentine receptor class alpha-27 (344 aa).

The next 7 membrane-spanning stretches (helical) occupy residues 28–48, 67–87, 128–148, 157–177, 203–223, 252–272, and 287–307; these read SIWMKINFVFVFILIFLTFYL, QILLMITLLNANLNQLIFLEI, GLLSALTFDRFFALYASTVYV, MLITVSIIVTVIVHIRTYGGV, AIFWIIMANCVLTIAVLLLNI, ICSVTSTQFVFLSFSTAALAI, and INIQYINGGVYGNLSIPVLIY.

The protein belongs to the nematode receptor-like protein sra family.

It is found in the membrane. This chain is Serpentine receptor class alpha-27 (sra-27), found in Caenorhabditis elegans.